Reading from the N-terminus, the 908-residue chain is MGVPAFFRWLSRKYPSVIIECNENKQVDADTGRNIYEDPTLPNPNGIEFDNLYLDMNGIIHPCTHPEDKPAPKNEDEMMVAIFECIDRLFGIVRPRKLLYMAIDGVAPRAKMNQQRSRRFRAAKETTEKRLEIARIREELLSRGCKLPPEKEKGEHFDSNCITPGTPFMDRLSKCLHYFVHDRQNNNPAWKGIKVILSDANVPGEGEHKIMDYIRKQRAQPDHDPNTQHVLCGADADLIMLGLATHEPNFTIIREEFLPNKPRPCDICNGFGHEMDKCVGLGATAPTSANFKPDVPIGAEVKFIFVRLSVLREYLKQTLEMPNLPFEYSFERALDDWVFMCFFVGNDFLPHLPSLEIREGAVDRLVELYKKCVYKTRGYLTDSGDVNLDRVQLIMTDLGNAEDQIFKSRQRREEQFKARDKARKRQERNQDHGSLNQSAFGASAVGPNSQQRSVGNYKEEAAALRNRKRTSDMANLDDEDEEENNDEVRLWEDGFKDRYYESKFDVAPGNQQFRYAVALQYVRGLCWVLKYYYQGCASWNWYFPYHYAPFASDFVNIQGLSTMFEKGTKPFNPLEQLMGVFPAASSSHVPEPWAKLMSDPESPIIDFYPEDFKIDLNGKKFAWQGVALLPFVDEKRLFKALVPYYDQLTGEEVKRNKRGDNYLYISNQSPHYKKVKKISEKDDESVCKAISFDGMRGTLGKTELNTAISGVLKSPISGLSDINDNITVTTTFRDPEYDEDYIFEAKRLENAVDPPQVLPNEQSGNKHRPVIGFNSHLTRAYVPDSGHRMLNAGIRNQQGGGGNGGGGGGYGQGGGYGQGIGGNQGQSYQNNSRNYNYNYNNNYNQHQGGGYQNNYNNRQQQQYGHNQRFNQDNSNQQQRNFNNYNGPRNNNYQQQGGSRQQNQNYRRF.

A CCHC-type zinc finger spans residues 263-280; sequence RPCDICNGFGHEMDKCVG. 2 disordered regions span residues 409-457 and 821-908; these read RQRR…VGNY and GGNQ…YRRF. A compositionally biased stretch (polar residues) spans 432-454; sequence HGSLNQSAFGASAVGPNSQQRSV. Ser-438 carries the post-translational modification Phosphoserine. Low complexity-rich tracts occupy residues 825-868 and 878-908; these read GQSY…HNQR and QRNFNNYNGPRNNNYQQQGGSRQQNQNYRRF.

Belongs to the 5'-3' exonuclease family. XRN2/RAT1 subfamily. Interacts with cuff and Rai1; the interaction with cuff may inhibit its role in RNA degradation.

It is found in the nucleus. Its function is as follows. A 5'-3' exoribonuclease. May promote the termination of transcription by RNA polymerase II and promote RNA degradation. Involved in turnover of piRNA precursors. The chain is 5'-3' exoribonuclease 2 homolog from Drosophila melanogaster (Fruit fly).